Here is a 902-residue protein sequence, read N- to C-terminus: Gamma-tubulin complex component 2 (902 aa).

Phosphotyrosine is present on Y83. The segment at 874–902 (AERSQKATPQVPVLRGPPAPAPRVAVTAQ) is disordered.

This sequence belongs to the TUBGCP family. In terms of assembly, component of the gamma-tubulin ring complex (gTuRC) consisting of TUBGCP2, TUBGCP3, TUBGCP4, TUBGCP5 and TUBGCP6 and gamma-tubulin TUBG1 or TUBG2. TUBGCP2, TUBGCP3, TUBGCP4, TUBGCP5 and TUBGCP6 assemble in a 5:5:2:1:1 stoichiometry; each is associated with a gamma-tubulin, thereby arranging 14 gamma-tubulins in a helical manner. Gamma-tubulin at the first position is blocked by TUBGCP3 at the last position, allowing 13 protafilaments to grow into a microtubule. The gTuRC (via TUBGCP3 and TUBGCP6) interacts with ACTB and MZT1; the interactions form a luminal bridge that stabilizes the initial structure during complex assembly. The gTuRC (via TUBGCP2) interacts with MZT2A/MZT2B and CDK5RAP2 (via CM1 motif); the interactions play a role in gTuRC activation. Interacts with ATF5; the ATF5:PCNT:polyglutamylated tubulin (PGT) tripartite unites the mother centriole and the pericentriolar material (PCM) in the centrosome. In terms of tissue distribution, ubiquitously expressed.

It is found in the cytoplasm. Its subcellular location is the cytoskeleton. It localises to the microtubule organizing center. The protein localises to the centrosome. Functionally, component of the gamma-tubulin ring complex (gTuRC) which mediates microtubule nucleation. The gTuRC regulates the minus-end nucleation of alpha-beta tubulin heterodimers that grow into microtubule protafilaments, a critical step in centrosome duplication and spindle formation. Plays a role in neuronal migration. The sequence is that of Gamma-tubulin complex component 2 (TUBGCP2) from Homo sapiens (Human).